Reading from the N-terminus, the 244-residue chain is Probable phosphatase NT01CX_1282 (244 aa).

9 residues coordinate Zn(2+): H8, H10, H16, H41, E74, H102, H132, D193, and H195.

This sequence belongs to the PHP family. The cofactor is Zn(2+).

In Clostridium novyi (strain NT), this protein is Probable phosphatase NT01CX_1282.